The sequence spans 115 residues: Large ribosomal subunit protein bL19 (115 aa).

It belongs to the bacterial ribosomal protein bL19 family.

This protein is located at the 30S-50S ribosomal subunit interface and may play a role in the structure and function of the aminoacyl-tRNA binding site. The chain is Large ribosomal subunit protein bL19 from Parabacteroides distasonis (strain ATCC 8503 / DSM 20701 / CIP 104284 / JCM 5825 / NCTC 11152).